A 37-amino-acid polypeptide reads, in one-letter code: Cytochrome b6-f complex subunit 7 (37 aa).

The helical transmembrane segment at 11–29 threads the bilayer; sequence AILSIVLVLVGLAWGFLLL.

It belongs to the PetM family. In terms of assembly, the 4 large subunits of the cytochrome b6-f complex are cytochrome b6, subunit IV (17 kDa polypeptide, PetD), cytochrome f and the Rieske protein, while the 4 small subunits are PetG, PetL, PetM and PetN. The complex functions as a dimer.

It localises to the cellular thylakoid membrane. Functionally, component of the cytochrome b6-f complex, which mediates electron transfer between photosystem II (PSII) and photosystem I (PSI), cyclic electron flow around PSI, and state transitions. The protein is Cytochrome b6-f complex subunit 7 of Gloeothece citriformis (strain PCC 7424) (Cyanothece sp. (strain PCC 7424)).